The primary structure comprises 327 residues: 2-keto-3-deoxygluconate permease (327 aa).

10 helical membrane passes run 10–30 (IPGG…TFSP), 42–62 (GMIT…GASI), 73–93 (KSGT…AIAS), 95–115 (IIPE…LALV), 139–159 (AGAF…IILG), 163–183 (IASF…VGFA), 199–219 (VQTL…LTVI), 224–244 (LLGI…LIIA), 254–274 (TAGI…VLIA), and 289–309 (SLVA…TSIW).

Belongs to the KdgT transporter family.

It is found in the cell inner membrane. It carries out the reaction 2-dehydro-3-deoxy-D-gluconate(in) + H(+)(in) = 2-dehydro-3-deoxy-D-gluconate(out) + H(+)(out). Functionally, catalyzes the proton-dependent uptake of 2-keto-3-deoxygluconate (KDG) into the cell. The sequence is that of 2-keto-3-deoxygluconate permease from Escherichia coli O157:H7.